A 607-amino-acid chain; its full sequence is UvrABC system protein C (607 aa).

The region spanning 15-92 (SQPGSYQMKD…IKRYRPYFNI (78 aa)) is the GIY-YIG domain. One can recognise a UVR domain in the interval 197-232 (GKAISDIKKKMKRASDSTEYELAADFRDRLKFIDQT).

This sequence belongs to the UvrC family. Interacts with UvrB in an incision complex.

The protein resides in the cytoplasm. The UvrABC repair system catalyzes the recognition and processing of DNA lesions. UvrC both incises the 5' and 3' sides of the lesion. The N-terminal half is responsible for the 3' incision and the C-terminal half is responsible for the 5' incision. This is UvrABC system protein C from Oenococcus oeni (strain ATCC BAA-331 / PSU-1).